Consider the following 373-residue polypeptide: tRNA-specific 2-thiouridylase MnmA (373 aa).

Residues 12–19 (GMSGGVDS) and methionine 38 contribute to the ATP site. The segment at 98–100 (NPD) is interaction with target base in tRNA. Cysteine 103 acts as the Nucleophile in catalysis. A disulfide bridge connects residues cysteine 103 and cysteine 200. Glycine 127 is a binding site for ATP. Positions 150-152 (KDQ) are interaction with tRNA. The active-site Cysteine persulfide intermediate is the cysteine 200. Positions 312 to 313 (RY) are interaction with tRNA.

This sequence belongs to the MnmA/TRMU family.

It is found in the cytoplasm. It catalyses the reaction S-sulfanyl-L-cysteinyl-[protein] + uridine(34) in tRNA + AH2 + ATP = 2-thiouridine(34) in tRNA + L-cysteinyl-[protein] + A + AMP + diphosphate + H(+). Catalyzes the 2-thiolation of uridine at the wobble position (U34) of tRNA, leading to the formation of s(2)U34. The protein is tRNA-specific 2-thiouridylase MnmA of Streptococcus thermophilus (strain CNRZ 1066).